The following is a 697-amino-acid chain: Probable potassium transporter 4 (697 aa).

Residues 1–29 (MSSSHTVTVSMDVEAGQKNKDKKGISQDL) are Cytoplasmic-facing. The helical transmembrane segment at 30 to 50 (ILAYKTLGVVFGGLVTSPLYV) threads the bilayer. Residues 51 to 66 (YPSMNLTNPTEEDYLG) lie on the Extracellular side of the membrane. Residue N55 is glycosylated (N-linked (GlcNAc...) asparagine). The chain crosses the membrane as a helical span at residues 67–87 (IYSIMFWTLTLIGVVKYICIA). At 88–152 (LNADDHGEGG…FIESSIIARR (65 aa)) the chain is on the cytoplasmic side. A helical membrane pass occupies residues 153 to 173 (LLLLTAILGMCMLIGDGILTP). At 174–189 (AISVLSAIDGLRGPFP) the chain is on the extracellular side. A helical transmembrane segment spans residues 190-210 (SVSKPAVEGLSAAILVGLFLL). Over 211 to 217 (QKYGTSK) the chain is Cytoplasmic. Residues 218-238 (VSFMFSPIMAAWTFATPVIGV) traverse the membrane as a helical segment. Residues 239–271 (YSIWRYYPGIFKAMSPHYIVRFFMTNQTRGWQL) lie on the Extracellular side of the membrane. N264 carries an N-linked (GlcNAc...) asparagine glycan. Residues 272–292 (LGGTVLCITGAEAMFADLGHF) traverse the membrane as a helical segment. The Cytoplasmic segment spans residues 293-300 (SKRSIQIA). A helical transmembrane segment spans residues 301–321 (FMSSIYPSLVLTYAGQTAYLI). The Extracellular segment spans residues 322-338 (NNVDDFSDGFYKFVPRP). Residues 339 to 359 (VYWPMFIIATLAAIVASQSLI) traverse the membrane as a helical segment. Over 360 to 390 (SATFSVIKQSVVLDYFPRVKVVHTSKDKEGE) the chain is Cytoplasmic. Residues 391-411 (VYSPETNYMLMLLCVGVILGF) form a helical membrane-spanning segment. Topologically, residues 412–422 (GDGKDIGNAFG) are extracellular. A helical transmembrane segment spans residues 423 to 443 (VVVILVMLITTILLTLVMLII). At 444-447 (WGTH) the chain is on the cytoplasmic side. A helical transmembrane segment spans residues 448 to 468 (VVLVALYLVPFLLLEATYVSA). The Extracellular segment spans residues 469-475 (VCTKILR). Residues 476-496 (GGWVPFAVSVALAAVMFGWYY) form a helical membrane-spanning segment. At 497-697 (GRQRKTEYEA…RVEIGMLYKA (201 aa)) the chain is on the cytoplasmic side.

Belongs to the HAK/KUP transporter (TC 2.A.72.3) family.

It is found in the membrane. High-affinity potassium transporter. The polypeptide is Probable potassium transporter 4 (HAK4) (Oryza sativa subsp. japonica (Rice)).